The following is a 104-amino-acid chain: NADH-ubiquinone oxidoreductase 12 kDa subunit, mitochondrial (104 aa).

It belongs to the complex I NDUFS6 subunit family. As to quaternary structure, complex I is composed of about 40 different subunits.

Its subcellular location is the mitochondrion inner membrane. In terms of biological role, accessory subunit of the mitochondrial membrane respiratory chain NADH dehydrogenase (Complex I), that is believed not to be involved in catalysis. Complex I functions in the transfer of electrons from NADH to the respiratory chain. The immediate electron acceptor for the enzyme is believed to be ubiquinone. The polypeptide is NADH-ubiquinone oxidoreductase 12 kDa subunit, mitochondrial (nuo-12.3) (Neurospora crassa (strain ATCC 24698 / 74-OR23-1A / CBS 708.71 / DSM 1257 / FGSC 987)).